Reading from the N-terminus, the 88-residue chain is Small ribosomal subunit protein uS15 (88 aa).

The protein belongs to the universal ribosomal protein uS15 family. As to quaternary structure, part of the 30S ribosomal subunit. Forms a bridge to the 50S subunit in the 70S ribosome, contacting the 23S rRNA.

Functionally, one of the primary rRNA binding proteins, it binds directly to 16S rRNA where it helps nucleate assembly of the platform of the 30S subunit by binding and bridging several RNA helices of the 16S rRNA. In terms of biological role, forms an intersubunit bridge (bridge B4) with the 23S rRNA of the 50S subunit in the ribosome. The protein is Small ribosomal subunit protein uS15 of Polaromonas sp. (strain JS666 / ATCC BAA-500).